Here is a 197-residue protein sequence, read N- to C-terminus: Thymidylate kinase (197 aa).

ATP is bound at residue 7-14 (GIDGSGKS).

The protein belongs to the thymidylate kinase family.

The catalysed reaction is dTMP + ATP = dTDP + ADP. Phosphorylation of dTMP to form dTDP in both de novo and salvage pathways of dTTP synthesis. The protein is Thymidylate kinase of Thermotoga petrophila (strain ATCC BAA-488 / DSM 13995 / JCM 10881 / RKU-1).